A 230-amino-acid chain; its full sequence is Protein-L-isoaspartate O-methyltransferase (230 aa).

Serine 68 is an active-site residue.

The protein belongs to the methyltransferase superfamily. L-isoaspartyl/D-aspartyl protein methyltransferase family.

The protein resides in the cytoplasm. The enzyme catalyses [protein]-L-isoaspartate + S-adenosyl-L-methionine = [protein]-L-isoaspartate alpha-methyl ester + S-adenosyl-L-homocysteine. In terms of biological role, catalyzes the methyl esterification of L-isoaspartyl residues in peptides and proteins that result from spontaneous decomposition of normal L-aspartyl and L-asparaginyl residues. It plays a role in the repair and/or degradation of damaged proteins. This chain is Protein-L-isoaspartate O-methyltransferase, found in Salinibacter ruber (strain DSM 13855 / M31).